The sequence spans 245 residues: tRNA1(Val) (adenine(37)-N6)-methyltransferase (245 aa).

Belongs to the methyltransferase superfamily. tRNA (adenine-N(6)-)-methyltransferase family.

The protein localises to the cytoplasm. The enzyme catalyses adenosine(37) in tRNA1(Val) + S-adenosyl-L-methionine = N(6)-methyladenosine(37) in tRNA1(Val) + S-adenosyl-L-homocysteine + H(+). In terms of biological role, specifically methylates the adenine in position 37 of tRNA(1)(Val) (anticodon cmo5UAC). This is tRNA1(Val) (adenine(37)-N6)-methyltransferase from Salmonella enteritidis PT4 (strain P125109).